Here is a 527-residue protein sequence, read N- to C-terminus: Organic cation/carnitine transporter 2 (527 aa).

Residues 1–27 (MAEPTQPLLTDSNSSSPRSLDDTIESY) are Cytoplasmic-facing. The chain crosses the membrane as a helical span at residues 28–48 (IGSFGWAQFLQAALVSFSGVF). The Extracellular portion of the chain corresponds to 49 to 119 (DAQQTFISVF…SFVKGLPESS (71 aa)). A helical transmembrane segment spans residues 120–140 (FFVGCLIGGLVLSTLADSSLG). Residues 141 to 149 (RKNMLFLSC) are Cytoplasmic-facing. A helical membrane pass occupies residues 150 to 170 (LVMAISTMLTVFSPNIWVYAV). Over 171–176 (LRFVNG) the chain is Extracellular. Residues 177-195 (FGRATIGTCALVLSTELVG) form a helical membrane-spanning segment. 190 to 197 (STELVGKK) contributes to the ATP binding site. The Cytoplasmic segment spans residues 196–201 (KKWRGR). A helical transmembrane segment spans residues 202 to 222 (VGIMSFFGFMLGFLSLPLMAY). The Extracellular portion of the chain corresponds to 223–230 (MNRGSSWR). The chain crosses the membrane as a helical span at residues 231 to 251 (ILYAWTSIPTIIYCVLVRFFV). The Cytoplasmic segment spans residues 252 to 326 (CESPRWLFVR…LVEKRWALKR (75 aa)). A helical transmembrane segment spans residues 327–347 (LSAVMAIAFGIGLVYYGMPLA). At 348 to 356 (LSNLDFNIY) the chain is on the extracellular side. The helical transmembrane segment at 357 to 377 (LSAAFNALMDLPANLITLFLV) threads the bilayer. The Cytoplasmic segment spans residues 378-385 (DKLSRRNA). A helical membrane pass occupies residues 386-406 (LIGFTALGGVSSVLIFALHNM). Topologically, residues 407–415 (RIGNHGALQ) are extracellular. Residues 416-436 (LALELISYFSACSAFNMEMIY) traverse the membrane as a helical segment. Topologically, residues 437–448 (TIELFPTCVRNS) are cytoplasmic. A helical transmembrane segment spans residues 449-469 (AIAMARQALVLGGVFSPIMVA). At 470–475 (AGRKNA) the chain is on the extracellular side. The chain crosses the membrane as a helical span at residues 476–496 (FWSFGLFGLAIGLLGLFAVGL). Residues 497–527 (PETRGSDLCDTMDEEECKDRRSKVAVNNVIA) lie on the Cytoplasmic side of the membrane.

Belongs to the major facilitator (TC 2.A.1) superfamily. Organic cation transporter (TC 2.A.1.19) family. In terms of tissue distribution, weakly expressed in roots, including tips and initiation site of lateral roots, siliques and flowers, especially in pollen and stigma.

Its subcellular location is the vacuole membrane. In terms of biological role, high affinity carnitine transporter involved in the active cellular uptake of carnitine. Also transports organic cations. The chain is Organic cation/carnitine transporter 2 (OCT2) from Arabidopsis thaliana (Mouse-ear cress).